The following is a 193-amino-acid chain: Nucleoside triphosphate pyrophosphatase (193 aa).

Residue D69 is the Proton acceptor of the active site.

This sequence belongs to the Maf family. A divalent metal cation serves as cofactor.

It localises to the cytoplasm. The catalysed reaction is a ribonucleoside 5'-triphosphate + H2O = a ribonucleoside 5'-phosphate + diphosphate + H(+). The enzyme catalyses a 2'-deoxyribonucleoside 5'-triphosphate + H2O = a 2'-deoxyribonucleoside 5'-phosphate + diphosphate + H(+). Its function is as follows. Nucleoside triphosphate pyrophosphatase. May have a dual role in cell division arrest and in preventing the incorporation of modified nucleotides into cellular nucleic acids. This Parasynechococcus marenigrum (strain WH8102) protein is Nucleoside triphosphate pyrophosphatase.